Here is a 143-residue protein sequence, read N- to C-terminus: MAIERTFSIIKPNAVAKNVIGSIFARFEAAGFKIVGTKMLHLTVEQARGFYAEHDGKPFFDGLVEFMTSGPILVSVLESENAVQRHRDLLGATNPANALAGTLRADYADSLTENGTHGSDSLESAQREIAFFFGEGEVCPRTR.

Positions 11, 59, 87, 93, 104, and 114 each coordinate ATP. His117 acts as the Pros-phosphohistidine intermediate in catalysis.

Belongs to the NDK family. As to quaternary structure, homotetramer. Mg(2+) is required as a cofactor.

The protein localises to the cytoplasm. It catalyses the reaction dZDP + ATP = dZTP + ADP. It carries out the reaction a 2'-deoxyribonucleoside 5'-diphosphate + ATP = a 2'-deoxyribonucleoside 5'-triphosphate + ADP. The catalysed reaction is a ribonucleoside 5'-diphosphate + ATP = a ribonucleoside 5'-triphosphate + ADP. Its pathway is purine metabolism. Functionally, major role in the synthesis of nucleoside triphosphates other than ATP. The ATP gamma phosphate is transferred to the NDP beta phosphate via a ping-pong mechanism, using a phosphorylated active-site intermediate. Its function is as follows. (Microbial infection) Catalyzes the phosphorylation of dZDP to dZTP, when the bacterium is infected by a phage that produces the substrate for the synthesis of dZTP (2- amino-2'-deoxyadenosine 5'-triphosphate), which is then used by the phage as a DNA polymerase substrate. The sequence is that of Nucleoside diphosphate kinase from Salmonella paratyphi C (strain RKS4594).